The chain runs to 115 residues: Large ribosomal subunit protein bL19 (115 aa).

It belongs to the bacterial ribosomal protein bL19 family.

Its function is as follows. This protein is located at the 30S-50S ribosomal subunit interface and may play a role in the structure and function of the aminoacyl-tRNA binding site. This Buchnera aphidicola subsp. Cinara cedri (strain Cc) protein is Large ribosomal subunit protein bL19.